Reading from the N-terminus, the 153-residue chain is Bacteriohemerythrin (153 aa).

The Fe cation site is built by His-21, His-57, Glu-61, His-76, His-80, His-115, and Asp-120.

The protein belongs to the hemerythrin family. Monomer.

Its function is as follows. Oxygen-binding protein. May be involved in a storage mechanism or for delivery to oxygen-requiring enzymes. The oxygen-binding site contains two iron atoms. This Stenotrophomonas maltophilia (strain R551-3) protein is Bacteriohemerythrin.